A 389-amino-acid polypeptide reads, in one-letter code: Exodeoxyribonuclease 7 large subunit (389 aa).

This sequence belongs to the XseA family. As to quaternary structure, heterooligomer composed of large and small subunits.

The protein localises to the cytoplasm. The catalysed reaction is Exonucleolytic cleavage in either 5'- to 3'- or 3'- to 5'-direction to yield nucleoside 5'-phosphates.. Bidirectionally degrades single-stranded DNA into large acid-insoluble oligonucleotides, which are then degraded further into small acid-soluble oligonucleotides. The chain is Exodeoxyribonuclease 7 large subunit from Pseudothermotoga lettingae (strain ATCC BAA-301 / DSM 14385 / NBRC 107922 / TMO) (Thermotoga lettingae).